We begin with the raw amino-acid sequence, 405 residues long: Riboflavin biosynthesis protein RibBA (405 aa).

Residues 1-205 are DHBP synthase; sequence MEEIKLNTIE…IKDLIAYRLK (205 aa). D-ribulose 5-phosphate is bound by residues 30–31, aspartate 35, 144–148, and glutamate 168; these read RE and RAGHT. Glutamate 31 serves as a coordination point for Mg(2+). Histidine 147 contacts Mg(2+). A GTP cyclohydrolase II region spans residues 206–405; the sequence is QESIVEKGVE…RMGHELHNIK (200 aa). 256–260 is a GTP binding site; sequence RMHSS. Zn(2+) is bound by residues cysteine 261, cysteine 272, and cysteine 274. Residues glutamine 277, 299–301, and threonine 321 each bind GTP; that span reads EGR. Aspartate 333 functions as the Proton acceptor; for GTP cyclohydrolase activity in the catalytic mechanism. The Nucleophile; for GTP cyclohydrolase activity role is filled by arginine 335. Residues threonine 356 and lysine 361 each contribute to the GTP site.

The protein in the N-terminal section; belongs to the DHBP synthase family. This sequence in the C-terminal section; belongs to the GTP cyclohydrolase II family. The cofactor is Mg(2+). Mn(2+) is required as a cofactor. Requires Zn(2+) as cofactor.

The enzyme catalyses D-ribulose 5-phosphate = (2S)-2-hydroxy-3-oxobutyl phosphate + formate + H(+). It catalyses the reaction GTP + 4 H2O = 2,5-diamino-6-hydroxy-4-(5-phosphoribosylamino)-pyrimidine + formate + 2 phosphate + 3 H(+). It functions in the pathway cofactor biosynthesis; riboflavin biosynthesis; 2-hydroxy-3-oxobutyl phosphate from D-ribulose 5-phosphate: step 1/1. It participates in cofactor biosynthesis; riboflavin biosynthesis; 5-amino-6-(D-ribitylamino)uracil from GTP: step 1/4. Functionally, catalyzes the conversion of D-ribulose 5-phosphate to formate and 3,4-dihydroxy-2-butanone 4-phosphate. Catalyzes the conversion of GTP to 2,5-diamino-6-ribosylamino-4(3H)-pyrimidinone 5'-phosphate (DARP), formate and pyrophosphate. This chain is Riboflavin biosynthesis protein RibBA, found in Porphyromonas gingivalis (strain ATCC 33277 / DSM 20709 / CIP 103683 / JCM 12257 / NCTC 11834 / 2561).